A 428-amino-acid chain; its full sequence is Peptidase B (428 aa).

Mn(2+) is bound by residues lysine 195 and aspartate 200. The active site involves lysine 207. The Mn(2+) site is built by aspartate 218, aspartate 277, and glutamate 279. Arginine 281 is a catalytic residue.

Belongs to the peptidase M17 family. In terms of assembly, homohexamer. Requires Mn(2+) as cofactor.

The protein resides in the cytoplasm. The enzyme catalyses Release of an N-terminal amino acid, Xaa, from a peptide or arylamide. Xaa is preferably Glu or Asp but may be other amino acids, including Leu, Met, His, Cys and Gln.. Functionally, probably plays an important role in intracellular peptide degradation. The protein is Peptidase B of Enterobacter sp. (strain 638).